The chain runs to 290 residues: Protease HtpX (290 aa).

The next 2 membrane-spanning stretches (helical) occupy residues 6 to 26 (LFLVTNLAVMLVLGVVLNILF) and 36 to 56 (ISGLLMFCAVFGFGGSFISLL). His143 provides a ligand contact to Zn(2+). The active site involves Glu144. His147 contacts Zn(2+). The next 2 membrane-spanning stretches (helical) occupy residues 158-178 (LIQGVVNTFVMFFARIVAGVI) and 200-220 (ITVFVLEMAFGVLASMIVMWF). Glu225 is a Zn(2+) binding site.

The protein belongs to the peptidase M48B family. Zn(2+) serves as cofactor.

The protein resides in the cell inner membrane. The polypeptide is Protease HtpX (Aeromonas salmonicida (strain A449)).